Consider the following 450-residue polypeptide: Homogentisate 1,2-dioxygenase (450 aa).

His304 acts as the Proton acceptor in catalysis. Fe cation is bound by residues His347 and Glu353. Positions 362 and 383 each coordinate homogentisate. His383 serves as a coordination point for Fe cation.

It belongs to the homogentisate dioxygenase family. As to quaternary structure, hexamer; dimer of trimers. Requires Fe cation as cofactor.

It carries out the reaction homogentisate + O2 = 4-maleylacetoacetate + H(+). Its pathway is amino-acid degradation; L-phenylalanine degradation; acetoacetate and fumarate from L-phenylalanine: step 4/6. Involved in the catabolism of homogentisate (2,5-dihydroxyphenylacetate or 2,5-OH-PhAc), a central intermediate in the degradation of phenylalanine and tyrosine. Catalyzes the oxidative ring cleavage of the aromatic ring of homogentisate to yield maleylacetoacetate. This chain is Homogentisate 1,2-dioxygenase, found in Burkholderia thailandensis (strain ATCC 700388 / DSM 13276 / CCUG 48851 / CIP 106301 / E264).